A 175-amino-acid chain; its full sequence is Centrosomal protein 20 (175 aa).

Positions 1-104 (MATIAELKAV…IVEDANGKSV (104 aa)) are necessary and sufficient for homooligomerization and localization to centrosomes and pericentriolar satellites. The 33-residue stretch at 49-81 (ENLLINELIREYLEFNKYKYSASVLTAEAGQPE) folds into the LisH domain. The interval 137–166 (RQNLAKPSTERNQKDRIPEPGRMAGTSIEE) is disordered. Residues 144–155 (STERNQKDRIPE) are compositionally biased toward basic and acidic residues.

The protein belongs to the CEP43 family. In terms of assembly, homooligomer; probably required for localization to centrosomes.

It is found in the cell projection. Its subcellular location is the cilium. It localises to the cytoplasm. The protein localises to the cytoskeleton. The protein resides in the cilium basal body. It is found in the microtubule organizing center. Its subcellular location is the centrosome. It localises to the cytoplasmic granule. The protein localises to the centriolar satellite. Its function is as follows. Involved in the biogenesis of cilia. Required for the recruitment of PLK1 to centrosomes and S phase progression. The chain is Centrosomal protein 20 (CEP20) from Gallus gallus (Chicken).